Consider the following 471-residue polypeptide: Monocarboxylate transporter 4 (471 aa).

Residues 1–17 are Cytoplasmic-facing; sequence MGGAVVDEGPTGIKAPD. A helical membrane pass occupies residues 18–38; sequence GGWGWAVLFGCFIITGFSYAF. Over 39 to 61 the chain is Extracellular; the sequence is PKAVSVFFKELMHEFGIGYSDTA. Residues 62–82 traverse the membrane as a helical segment; it reads WISSILLAMLYGTGPLCSMCV. Topologically, residues 83 to 84 are cytoplasmic; that stretch reads NR. A helical membrane pass occupies residues 85 to 105; that stretch reads FGCRPVMLVGGLFASLGMVAA. The Extracellular segment spans residues 106 to 109; it reads SFCR. A helical membrane pass occupies residues 110–130; the sequence is SIIQIYLTTGVITGLGLALNF. Residues 131–149 are Cytoplasmic-facing; that stretch reads QPSLIMLNRYFNKRRPMAN. Residues 150 to 170 form a helical membrane-spanning segment; it reads GLAAAGSPVFLCALSPLGQLL. The Extracellular segment spans residues 171–179; that stretch reads QDHYGWRGG. The helical transmembrane segment at 180-200 threads the bilayer; it reads FLILGGLLLNCCVCAALMRPL. The Cytoplasmic segment spans residues 201–231; the sequence is VAPQASGGAEPHGPQRPSPRLLDLSVFRDRG. A helical transmembrane segment spans residues 232 to 252; sequence FLIYAVAASIMVLGLFVPPVF. Topologically, residues 253–267 are extracellular; that stretch reads VVSYAKDMGVPDTKA. The chain crosses the membrane as a helical span at residues 268 to 288; the sequence is AFLLTILGFIDIFARPTAGFI. Topologically, residues 289–298 are cytoplasmic; sequence TGLKKVRPYS. Residues 299 to 319 form a helical membrane-spanning segment; sequence VYLFSFAMFFNGFTDLTGSTA. Residues 320 to 321 are Extracellular-facing; it reads SD. The chain crosses the membrane as a helical span at residues 322 to 342; that stretch reads YGGLVVFCIFFGISYGMVGAL. Residues 343–355 are Cytoplasmic-facing; that stretch reads QFEVLMAIVGTQK. A helical transmembrane segment spans residues 356-376; it reads FSSAIGLVLLLEAVAVLIGPP. The Extracellular portion of the chain corresponds to 377-391; it reads SGGKLLDATKVYKYV. The chain crosses the membrane as a helical span at residues 392–412; that stretch reads FILAGAEVLTSSLVLLLGNFF. At 413-471 the chain is on the cytoplasmic side; sequence CIGKRKRPEVTKPEEVASEEEKLHKPPVDVRVDSREVEHFLKAEPEKNGEVVHTPETSV. 2 basolateral sorting signal regions span residues 429–447 and 447–471; these read ASEE…VDSR and REVE…ETSV. Serine 430 carries the post-translational modification Phosphoserine. Residue threonine 466 is modified to Phosphothreonine. At serine 470 the chain carries Phosphoserine.

This sequence belongs to the major facilitator superfamily. Monocarboxylate porter (TC 2.A.1.13) family. In terms of assembly, interacts with BSG; interaction mediates SLC16A3 targeting to the plasma membrane. Detected in testis, small intestine, parotid gland, lung and brain. Small amounts are detected in heart, kidney and spleen. Expressed in skeletal muscle.

Its subcellular location is the cell membrane. The protein resides in the basolateral cell membrane. The enzyme catalyses (S)-lactate(in) + H(+)(in) = (S)-lactate(out) + H(+)(out). It catalyses the reaction pyruvate(out) + H(+)(out) = pyruvate(in) + H(+)(in). Functionally, proton-dependent transporter of monocarboxylates such as L-lactate and pyruvate. Plays a predominant role in the L-lactate efflux from highly glycolytic cells. The sequence is that of Monocarboxylate transporter 4 (Slc16a3) from Rattus norvegicus (Rat).